Here is a 1107-residue protein sequence, read N- to C-terminus: Ubiquitin-associated protein 2-like (1107 aa).

Met-1 is modified (N-acetylmethionine). Residues 1–33 (MMTSVGTNRARGNWEQPQNQNQTQHKQRPQATA) are disordered. The UBA domain maps to 49–89 (DFEEKVKQLIDITGKNQDECVIALHDCNGDVNRAINVLLEG). The segment at 92–229 (DTHSWEMVGK…NTWNNTGHFE (138 aa)) is disordered. Residues 118-132 (EEGKENRDRDRDYSR) are compositionally biased toward basic and acidic residues. The segment covering 133 to 145 (RRGGPPRRGRGAS) has biased composition (basic residues). Arg-187 and Arg-190 each carry asymmetric dimethylarginine. The segment covering 213-226 (NYGNSSGNTWNNTG) has biased composition (low complexity). 3 positions are modified to phosphoserine: Ser-376, Ser-380, and Ser-436. Thr-445 bears the Phosphothreonine mark. 3 disordered regions span residues 461 to 513 (AVAT…KKTS), 550 to 676 (SDYE…IPSL), and 689 to 814 (ANQH…LPPG). Ser-474, Ser-487, Ser-490, Ser-491, and Ser-497 each carry phosphoserine. 2 stretches are compositionally biased toward low complexity: residues 494–505 (QSSSPQPAQQKL) and 554–589 (STPT…SQES). Positions 590–656 (GYQSGPIQST…TQLQTTQSVE (67 aa)) are enriched in polar residues. Residues Ser-624, Ser-625, Ser-628, and Ser-629 each carry the phosphoserine modification. A compositionally biased stretch (low complexity) spans 665-675 (SESPSTSSIPS). Over residues 689-713 (ANQHSSSLSGLSHTEEIPNTTTTQH) the composition is skewed to polar residues. Over residues 714–804 (SSALSTQQNT…STRSSVATTS (91 aa)) the composition is skewed to low complexity. Phosphoserine occurs at positions 872 and 879. 2 disordered regions span residues 885–921 (FGRG…LNPA) and 1060–1107 (QQPH…WGAN). Composition is skewed to low complexity over residues 893 to 916 (PAPA…TQQT) and 1073 to 1087 (QDGQ…QTSS). The segment covering 1088 to 1107 (IPQKPQTNKSAYNSYSWGAN) has biased composition (polar residues).

Interacts with BMI1. Part of a complex consisting of UBAP2L, BMI1 and RNF2. Interacts with G3BP1 (via NTF2 domain); promoting stress granule formation.

The protein resides in the nucleus. It localises to the chromosome. It is found in the cytoplasm. Its subcellular location is the stress granule. Functionally, recruits the ubiquitination machinery to RNA polymerase II for polyubiquitination, removal and degradation, when the transcription-coupled nucleotide excision repair (TC-NER) machinery fails to resolve DNA damage. Plays an important role in the activity of long-term repopulating hematopoietic stem cells (LT-HSCs). Is a regulator of stress granule assembly, required for their efficient formation. Required for proper brain development and neocortex lamination. The chain is Ubiquitin-associated protein 2-like from Mus musculus (Mouse).